We begin with the raw amino-acid sequence, 364 residues long: Lytic cellulose monooxygenase (364 aa).

The signal sequence occupies residues 1-34; that stretch reads MARRSRYISLAAVMATLLSALGVTFLLGQGRAEA. Residues His35 and His144 each coordinate Cu cation. One can recognise a Chitin-binding type-4 domain in the interval 35–225; that stretch reads HGVAMMPGSR…QENFFSCSDV (191 aa). The tract at residues 234-261 is disordered; that stretch reads VTGIRGSGGTPTPTPTPTTPPTTPPPTH. Residues 245–260 are compositionally biased toward pro residues; the sequence is TPTPTPTTPPTTPPPT. Residues 258–364 form the CBM2 domain; the sequence is PPTHSGSCMA…PVGTIGCVAP (107 aa).

It depends on Cu(2+) as a cofactor.

The protein resides in the secreted. The enzyme catalyses [(1-&gt;4)-beta-D-glucosyl]n+m + reduced acceptor + O2 = [(1-&gt;4)-beta-D-glucosyl]m-1-(1-&gt;4)-D-glucono-1,5-lactone + [(1-&gt;4)-beta-D-glucosyl]n + acceptor + H2O.. It participates in glycan metabolism; cellulose degradation. Functionally, involved in the degradation of lignocellulosic biomass. Catalyzes the oxidative cleavage of glycosidic bonds in cellulosic substrates via a copper-dependent mechanism. Degrades phosphoric acid swollen cellulose (PASC) to oxidized cellooligosaccharides with degrees of polymerization of 4-8. Also shows activity on agricultural fiber paper pulps such as flax pulp. Is not active on chitin. The chain is Lytic cellulose monooxygenase from Streptomyces ambofaciens (strain ATCC 23877 / 3486 / DSM 40053 / JCM 4204 / NBRC 12836 / NRRL B-2516).